The primary structure comprises 553 residues: MDIKRTVLWVIFFMSAVMLYDNWQRSHGRPSMFFPSATQTAPAAAGGASGAGATTTAGNVPAPAAGTAPATTAPAAQAQLVKFSTDVYDGEIDTRGGTLAKLTLKKQGDGKQPDLYITLFDHTAGHTYLARTGLLGGDFPNHNDVYTQVNAGPTSLSGDQNTLKLSFESPVKGGVKVVKTYTFTRGSYVIGVDTKIDNVGTTPVTPTLYMELVRDNTAVETPMFSHTFLGPAVYTDAKHFQKINFSDLDKNKADYVTSADNGWVAMVQHYFASAWIPQHGVKRDIYAEKIDPSLYRVGVKQPVAAIAPGQSADVQARLFAGPEEERMLEGIAPGLELVKDYGWVTIIAKPLFWLLEKIHSYVGNWGWAIVLLTLLIKAVFFPLSAASYKSMARMKEITPRMQALRERFKNDPQKMNAALMELYKTEKVNPFGGCLPVVIQIPVFISLYWVLLASVEMRGAPWILWIHDLSQRDPYFILPVLMAVSMYVQTSLNPTPPDPVQAKMMKFMPIAFSVMFFFFPAGLVLYYVVNNVLSIAQQYYITRKLGGVKKKPA.

5 helical membrane passes run 7–24 (VLWV…DNWQ), 365–385 (WGWA…PLSA), 435–455 (LPVV…LASV), 474–494 (PYFI…SLNP), and 509–529 (PIAF…YYVV).

The protein belongs to the OXA1/ALB3/YidC family. Type 1 subfamily. In terms of assembly, interacts with the Sec translocase complex via SecD. Specifically interacts with transmembrane segments of nascent integral membrane proteins during membrane integration.

It is found in the cell inner membrane. Required for the insertion and/or proper folding and/or complex formation of integral membrane proteins into the membrane. Involved in integration of membrane proteins that insert both dependently and independently of the Sec translocase complex, as well as at least some lipoproteins. Aids folding of multispanning membrane proteins. This chain is Membrane protein insertase YidC, found in Burkholderia multivorans (strain ATCC 17616 / 249).